Consider the following 290-residue polypeptide: Small ribosomal subunit protein uS2 (290 aa).

The tract at residues 269–290 (WEAEASGDWAAESAQPNPETKW) is disordered.

Belongs to the universal ribosomal protein uS2 family. Component of the small ribosomal subunit. Mature ribosomes consist of a small (40S) and a large (60S) subunit. The 40S subunit contains about 33 different proteins and 1 molecule of RNA (18S). The 60S subunit contains about 49 different proteins and 3 molecules of RNA (25S, 5.8S and 5S). Interacts with rps21.

The protein localises to the cytoplasm. In terms of biological role, required for the assembly and/or stability of the 40S ribosomal subunit. Required for the processing of the 20S rRNA-precursor to mature 18S rRNA in a late step of the maturation of 40S ribosomal subunits. This Talaromyces marneffei (strain ATCC 18224 / CBS 334.59 / QM 7333) (Penicillium marneffei) protein is Small ribosomal subunit protein uS2 (rps0).